A 631-amino-acid chain; its full sequence is Quinoprotein alcohol dehydrogenase PedE (631 aa).

A signal peptide spans Met-1–Ala-33. Residues Asp-53, Thr-56, and Asp-59 each contribute to the Ca(2+) site. Position 103 (Glu-103) interacts with pyrroloquinoline quinone. The cysteines at positions 147 and 148 are disulfide-linked. Residues Arg-153, Thr-197, and His-215–Ser-217 each bind pyrroloquinoline quinone. Ca(2+) is bound at residue Glu-221. Residues Gly-250–Gly-286 form a disordered region. The Ca(2+) site is built by Asn-308 and Asp-358. Asp-358 (proton acceptor) is an active-site residue. Residue Arg-386 coordinates pyrroloquinoline quinone. A disordered region spans residues Gly-421 to Pro-443. Trp-531 and Ala-595 together coordinate pyrroloquinoline quinone.

This sequence belongs to the bacterial PQQ dehydrogenase family. In terms of assembly, homodimer. Interacts with cytochrome c550. The cofactor is pyrroloquinoline quinone. Ca(2+) is required as a cofactor. The disulfide ring formed between the two adjacent cysteine residues Cys-147 and Cys-148 is essential for efficient electron transfer at pH 7 from PedE to its natural electron acceptor cytochrome c550.

It localises to the periplasm. The catalysed reaction is a primary alcohol + 2 Fe(III)-[cytochrome c] = an aldehyde + 2 Fe(II)-[cytochrome c] + 2 H(+). It catalyses the reaction ethanol + 2 Fe(III)-[cytochrome c] = acetaldehyde + 2 Fe(II)-[cytochrome c] + 2 H(+). It carries out the reaction butan-1-ol + 2 Fe(III)-[cytochrome c] = butanal + 2 Fe(II)-[cytochrome c] + 2 H(+). The enzyme catalyses butan-2-ol + 2 Fe(III)-[cytochrome c] = butan-2-one + 2 Fe(II)-[cytochrome c] + 2 H(+). The catalysed reaction is 2-phenylethanol + 2 Fe(III)-[cytochrome c] = 2-phenylacetaldehyde + 2 Fe(II)-[cytochrome c] + 2 H(+). It catalyses the reaction octan-1-ol + 2 Fe(III)-[cytochrome c] = octanal + 2 Fe(II)-[cytochrome c] + 2 H(+). It carries out the reaction hexan-1-ol + 2 Fe(III)-[cytochrome c] = hexanal + 2 Fe(II)-[cytochrome c] + 2 H(+). The enzyme catalyses cinnamyl alcohol + 2 Fe(III)-[cytochrome c] = cinnamaldehyde + 2 Fe(II)-[cytochrome c] + 2 H(+). The catalysed reaction is farnesol + 2 Fe(III)-[cytochrome c] = farnesal + 2 Fe(II)-[cytochrome c] + 2 H(+). It catalyses the reaction an aldehyde + 2 Fe(III)-[cytochrome c] + H2O = a carboxylate + 2 Fe(II)-[cytochrome c] + 3 H(+). It carries out the reaction acetaldehyde + 2 Fe(III)-[cytochrome c] + H2O = 2 Fe(II)-[cytochrome c] + acetate + 3 H(+). The enzyme catalyses butanal + 2 Fe(III)-[cytochrome c] + H2O = butanoate + 2 Fe(II)-[cytochrome c] + 3 H(+). The catalysed reaction is hexanal + 2 Fe(III)-[cytochrome c] + H2O = hexanoate + 2 Fe(II)-[cytochrome c] + 3 H(+). It catalyses the reaction octanal + 2 Fe(III)-[cytochrome c] + H2O = octanoate + 2 Fe(II)-[cytochrome c] + 3 H(+). Its function is as follows. Alcohol dehydrogenase that catalyzes the oxidation of a range of substrates, including linear and aromatic primary and secondary alcohols, as well as aldehydes, allowing bacterial growth with a variety of volatile organic compounds (VOCs) as carbon and energy sources. Uses a specific inducible cytochrome c550, encoded by the adjacent gene in the locus, as electron acceptor. The protein is Quinoprotein alcohol dehydrogenase PedE of Pseudomonas putida (strain ATCC 47054 / DSM 6125 / CFBP 8728 / NCIMB 11950 / KT2440).